We begin with the raw amino-acid sequence, 248 residues long: Mannose-binding protein C (248 aa).

The first 20 residues, 1 to 20, serve as a signal peptide directing secretion; it reads MSLFPSLPLLLLSVVATSYS. The region spanning 42–99 is the Collagen-like domain; sequence GINGFPGKDGRDGTKGEKGEPGQGLRGLQGPPGKLGPPGNPGPSGSPGPKGQKGDPGE. Residues 43 to 111 form a disordered region; it reads INGFPGKDGR…DCDSSLAASE (69 aa). Pro-47 is modified (4-hydroxyproline). Basic and acidic residues predominate over residues 49–61; it reads KDGRDGTKGEKGE. 4 positions are modified to 4-hydroxyproline: Pro-73, Pro-79, Pro-82, and Pro-88. Residues 75-87 show a composition bias toward pro residues; that stretch reads KLGPPGNPGPSGS. A coiled-coil region spans residues 112–130; that stretch reads RKALQTEMAHIKKWLTFSL. One can recognise a C-type lectin domain in the interval 134 to 245; the sequence is VGNKFFLTNG…CSSSHLALCE (112 aa). 2 disulfide bridges follow: Cys-155/Cys-244 and Cys-222/Cys-236.

As to quaternary structure, oligomeric complex of 3 or more homotrimers. Interacts with MASP1 and MASP2. Interacts with MEP1A and MEP1B and may inhibit their catalytic activity. Post-translationally, hydroxylation on proline residues within the sequence motif, GXPG, is most likely to be 4-hydroxy as this fits the requirement for 4-hydroxylation in vertebrates.

It is found in the secreted. Its function is as follows. Calcium-dependent lectin involved in innate immune defense. Binds mannose, fucose and N-acetylglucosamine on different microorganisms and activates the lectin complement pathway. Binds to late apoptotic cells, as well as to apoptotic blebs and to necrotic cells, but not to early apoptotic cells, facilitating their uptake by macrophages. The protein is Mannose-binding protein C (MBL2) of Trachypithecus obscurus (Dusky leaf-monkey).